Reading from the N-terminus, the 360-residue chain is uncharacterized protein (360 aa).

The segment covering 22 to 32 (EEDVEPNEEAE) has biased composition (acidic residues). The tract at residues 22–55 (EEDVEPNEEAEGPGGVHKKRRGARKKNRRQRMEG) is disordered. The span at 37-50 (VHKKRRGARKKNRR) shows a compositional bias: basic residues.

This is an uncharacterized protein from Caenorhabditis elegans.